Here is a 284-residue protein sequence, read N- to C-terminus: MEMO1 family protein Mevan_0697 (284 aa).

It belongs to the MEMO1 family.

The polypeptide is MEMO1 family protein Mevan_0697 (Methanococcus vannielii (strain ATCC 35089 / DSM 1224 / JCM 13029 / OCM 148 / SB)).